The sequence spans 159 residues: 6,7-dimethyl-8-ribityllumazine synthase (159 aa).

Residues phenylalanine 22, 56–58 (AFE), and 80–82 (AVI) contribute to the 5-amino-6-(D-ribitylamino)uracil site. 85 to 86 (AT) is a binding site for (2S)-2-hydroxy-3-oxobutyl phosphate. The active-site Proton donor is the histidine 88. Residue phenylalanine 113 coordinates 5-amino-6-(D-ribitylamino)uracil. A (2S)-2-hydroxy-3-oxobutyl phosphate-binding site is contributed by arginine 127.

Belongs to the DMRL synthase family.

The catalysed reaction is (2S)-2-hydroxy-3-oxobutyl phosphate + 5-amino-6-(D-ribitylamino)uracil = 6,7-dimethyl-8-(1-D-ribityl)lumazine + phosphate + 2 H2O + H(+). Its pathway is cofactor biosynthesis; riboflavin biosynthesis; riboflavin from 2-hydroxy-3-oxobutyl phosphate and 5-amino-6-(D-ribitylamino)uracil: step 1/2. Functionally, catalyzes the formation of 6,7-dimethyl-8-ribityllumazine by condensation of 5-amino-6-(D-ribitylamino)uracil with 3,4-dihydroxy-2-butanone 4-phosphate. This is the penultimate step in the biosynthesis of riboflavin. The polypeptide is 6,7-dimethyl-8-ribityllumazine synthase (Lactiplantibacillus plantarum (strain ATCC BAA-793 / NCIMB 8826 / WCFS1) (Lactobacillus plantarum)).